The sequence spans 630 residues: tRNA uridine 5-carboxymethylaminomethyl modification enzyme MnmG (630 aa).

Position 13 to 18 (13 to 18) interacts with FAD; it reads GGGHAG. NAD(+) is bound at residue 273–287; the sequence is GPRYCPSIEDKIHRF.

Belongs to the MnmG family. As to quaternary structure, homodimer. Heterotetramer of two MnmE and two MnmG subunits. FAD is required as a cofactor.

It is found in the cytoplasm. Its function is as follows. NAD-binding protein involved in the addition of a carboxymethylaminomethyl (cmnm) group at the wobble position (U34) of certain tRNAs, forming tRNA-cmnm(5)s(2)U34. The polypeptide is tRNA uridine 5-carboxymethylaminomethyl modification enzyme MnmG (Pseudomonas putida (strain ATCC 700007 / DSM 6899 / JCM 31910 / BCRC 17059 / LMG 24140 / F1)).